The chain runs to 325 residues: Tetraacyldisaccharide 4'-kinase (325 aa).

55–62 (TAGGNGKT) contributes to the ATP binding site.

It belongs to the LpxK family.

It carries out the reaction a lipid A disaccharide + ATP = a lipid IVA + ADP + H(+). It participates in glycolipid biosynthesis; lipid IV(A) biosynthesis; lipid IV(A) from (3R)-3-hydroxytetradecanoyl-[acyl-carrier-protein] and UDP-N-acetyl-alpha-D-glucosamine: step 6/6. Functionally, transfers the gamma-phosphate of ATP to the 4'-position of a tetraacyldisaccharide 1-phosphate intermediate (termed DS-1-P) to form tetraacyldisaccharide 1,4'-bis-phosphate (lipid IVA). In Salmonella paratyphi C (strain RKS4594), this protein is Tetraacyldisaccharide 4'-kinase.